A 235-amino-acid polypeptide reads, in one-letter code: MIEIIQEYWKSLLWTDGYRFTGVAITLWLLISSVVMGGLLAVILAVGRVSSNKFIRFPIWLFTYIFRGTPLYVQLLVFYSGMYTLEIVKGTDLLNAFFRSGLNCTVLALTLNTCAYTTEIFAGAIRSVPHGEIEAARAYGFSSFKMYRCIILPSALRIALPAYSNEVILMLHSTALAFTATVPDLLKIARDINSATYQPFTAFGIAAVLYLLISYVLISLFRRAERRWLQHVSSK.

At 1 to 26 (MIEIIQEYWKSLLWTDGYRFTGVAIT) the chain is on the periplasmic side. One can recognise an ABC transmembrane type-1 domain in the interval 23–221 (VAITLWLLIS…LISYVLISLF (199 aa)). A helical membrane pass occupies residues 27-47 (LWLLISSVVMGGLLAVILAVG). The Cytoplasmic portion of the chain corresponds to 48 to 58 (RVSSNKFIRFP). A helical membrane pass occupies residues 59-79 (IWLFTYIFRGTPLYVQLLVFY). Residues 80-104 (SGMYTLEIVKGTDLLNAFFRSGLNC) lie on the Periplasmic side of the membrane. A helical transmembrane segment spans residues 105-125 (TVLALTLNTCAYTTEIFAGAI). The Cytoplasmic portion of the chain corresponds to 126-157 (RSVPHGEIEAARAYGFSSFKMYRCIILPSALR). The helical transmembrane segment at 158–178 (IALPAYSNEVILMLHSTALAF) threads the bilayer. The Periplasmic segment spans residues 179 to 199 (TATVPDLLKIARDINSATYQP). The chain crosses the membrane as a helical span at residues 200–220 (FTAFGIAAVLYLLISYVLISL). Residues 221-235 (FRRAERRWLQHVSSK) lie on the Cytoplasmic side of the membrane.

It belongs to the binding-protein-dependent transport system permease family. HisMQ subfamily. As to quaternary structure, the HisPMQJ complex is composed of two ATP-binding proteins (HisP), two transmembrane proteins (HisM and HisQ) and a solute-binding protein (HisJ). The HisPMQ-ArgT complex is composed of two ATP-binding proteins (HisP), two transmembrane proteins (HisM and HisQ) and a solute-binding protein (ArgT).

Its subcellular location is the cell inner membrane. In terms of biological role, part of the ABC transporter complex HisPMQJ involved in histidine transport. Is also part of the ABC transporter complex HisPMQ-ArgT involved in lysine/arginine/ornithine transport. Probably responsible for the translocation of the substrate across the membrane. The polypeptide is Histidine/lysine/arginine/ornithine transport system permease protein HisM (hisM) (Salmonella typhi).